The sequence spans 551 residues: Hydroxylamine reductase (551 aa).

[2Fe-2S] cluster-binding residues include cysteine 3, cysteine 6, cysteine 18, and cysteine 25. Hybrid [4Fe-2O-2S] cluster-binding residues include histidine 249, glutamate 273, cysteine 317, cysteine 405, cysteine 433, cysteine 458, glutamate 492, and lysine 494. Cysteine 405 carries the post-translational modification Cysteine persulfide.

This sequence belongs to the HCP family. [2Fe-2S] cluster serves as cofactor. The cofactor is hybrid [4Fe-2O-2S] cluster.

Its subcellular location is the cytoplasm. It catalyses the reaction A + NH4(+) + H2O = hydroxylamine + AH2 + H(+). Functionally, catalyzes the reduction of hydroxylamine to form NH(3) and H(2)O. The protein is Hydroxylamine reductase of Edwardsiella ictaluri (strain 93-146).